The sequence spans 423 residues: MDQTLQQHGPVDLAFTAPPSKSFTHRALIIAALADGESLIRGPLIAEDTLLTVRALQALGADITDTPEGYRVQGTDGRPDCAEGTVLDLKNSGTSLRLLSSIALLCSSTAGVTLTGSPRMQQRPIGELGDAIRTLGGSVRYLAADGYPPCVVQGPLVGGEATLDGSVSSQFISSLLLAAPYAVRPVDLKVARQPVSRSYLEITGAVMAAFGVPVRRVGYTHFTVQPARYRGREYTVEGDYSSASYFFALAATLGGKVTVRNLNHDSVQGDRLFVAALKAMGCRVTRETDGVTIERTKNLHGISIDMTTAPDTVQTLAVVAALADSPTTITGVGHLQYKESDRVAVTAGTLRALGCTVDISADAITIHPGPLHGGVIDPHDDHRTAMAFAVLGLAVGDVTIEDPACVGKSFPKFWNALAAGGLL.

The 3-phosphoshikimate site is built by Lys-21, Ser-22, and Arg-26. Position 21 (Lys-21) interacts with phosphoenolpyruvate. Residues Gly-93 and Arg-123 each coordinate phosphoenolpyruvate. The 3-phosphoshikimate site is built by Ser-168, Ser-169, Gln-170, Ser-196, Asp-311, and Lys-338. Phosphoenolpyruvate is bound at residue Gln-170. Asp-311 serves as the catalytic Proton acceptor. Phosphoenolpyruvate is bound by residues Arg-342, Arg-383, and Lys-408.

The protein belongs to the EPSP synthase family. As to quaternary structure, monomer.

Its subcellular location is the cytoplasm. The catalysed reaction is 3-phosphoshikimate + phosphoenolpyruvate = 5-O-(1-carboxyvinyl)-3-phosphoshikimate + phosphate. The protein operates within metabolic intermediate biosynthesis; chorismate biosynthesis. In terms of biological role, catalyzes the transfer of the enolpyruvyl moiety of phosphoenolpyruvate (PEP) to the 5-hydroxyl of shikimate-3-phosphate (S3P) to produce enolpyruvyl shikimate-3-phosphate and inorganic phosphate. This chain is 3-phosphoshikimate 1-carboxyvinyltransferase, found in Methanosphaerula palustris (strain ATCC BAA-1556 / DSM 19958 / E1-9c).